A 446-amino-acid polypeptide reads, in one-letter code: B3 domain-containing protein REM12 (446 aa).

The disordered stretch occupies residues 1–46; the sequence is MVLNSSDLGPSRCDIRDLPAPSSTNDQGKTELARKKKVKRSNTEIE. 2 consecutive DNA-binding regions (TF-B3) follow at residues 56–153 and 193–289; these read CFVA…FCST and FMTL…VNTQ. The segment at 295-334 is disordered; that stretch reads SQQGECSRDSEKESSICAEPSRGNKKWKATNNRKERRDSS. A DNA-binding region (TF-B3 3) is located at residues 341–435; that stretch reads YVTLTLTPED…TTPVFKFCSN (95 aa).

It is found in the nucleus. The chain is B3 domain-containing protein REM12 (REM12) from Arabidopsis thaliana (Mouse-ear cress).